A 232-amino-acid polypeptide reads, in one-letter code: Mediator of RNA polymerase II transcription subunit 18 (232 aa).

Belongs to the Mediator complex subunit 18 family. In terms of assembly, component of the Mediator complex.

Its subcellular location is the nucleus. In terms of biological role, component of the Mediator complex, a coactivator involved in the regulated transcription of nearly all RNA polymerase II-dependent genes. Mediator functions as a bridge to convey information from gene-specific regulatory proteins to the basal RNA polymerase II transcription machinery. Mediator is recruited to promoters by direct interactions with regulatory proteins and serves as a scaffold for the assembly of a functional preinitiation complex with RNA polymerase II and the general transcription factors. The chain is Mediator of RNA polymerase II transcription subunit 18 (mdt-18) from Caenorhabditis elegans.